The following is a 298-amino-acid chain: Trimeric intracellular cation channel type A (298 aa).

Topologically, residues 1 to 18 are lumenal; sequence MDLMSALSLGELALSFSR. The chain crosses the membrane as a helical span at residues 19–39; sequence VPLFPVFDLSYFIVSIIYLKY. Residues 40–51 are Cytoplasmic-facing; sequence EPGAVELSRRHP. A helical transmembrane segment spans residues 52-72; that stretch reads VASWLCAMLHCFGSYILADLL. The Lumenal segment spans residues 73-85; the sequence is LGEPIIDYFSNSS. G74 provides a ligand contact to Ca(2+). A helical membrane pass occupies residues 86-106; that stretch reads SILLASGVWYLIFFCPLDLFY. Residues 107-144 lie on the Cytoplasmic side of the membrane; the sequence is KCVCFLPVKLIFVAMKEVVRVRKIAVGIHHAHHHYHHG. A 1,2-diacyl-sn-glycero-3-phospho-(1D-myo-inositol-4,5-bisphosphate)-binding residues include K122 and R126. Residues 145–165 form a helical membrane-spanning segment; sequence WFIMIATGWVKGSGVALLSNV. Topologically, residues 166-178 are lumenal; it reads EQLLRGVWKPETN. Residues 179-199 form a helical membrane-spanning segment; sequence EILHMSFPTKASLYGAILFTL. At 200-209 the chain is on the cytoplasmic side; it reads QQTRWLPVSK. A helical membrane pass occupies residues 210-230; it reads ASLIFVFTMFMVSCKVFLTAT. Over 231 to 234 the chain is Lumenal; sequence HSHS. Residues 235–255 form a helical membrane-spanning segment; the sequence is SPFDILEGYICPVLFGATWGG. At 256-298 the chain is on the cytoplasmic side; it reads DHHHDNHGAPHGMGLGTQHSGLPAKAKEELGEGSRKKKTKKAD. Residues 260-298 are disordered; the sequence is DNHGAPHGMGLGTQHSGLPAKAKEELGEGSRKKKTKKAD. Over residues 280–289 the composition is skewed to basic and acidic residues; it reads KAKEELGEGS.

Belongs to the TMEM38 family. As to quaternary structure, homotrimer; conformation seems to be controled by binding to diacylglycerol (DAG). Expressed at high levels in heart and striated muscle. Also detected in brain, lung and kidney.

Its subcellular location is the sarcoplasmic reticulum membrane. The protein localises to the nucleus membrane. It carries out the reaction K(+)(in) = K(+)(out). With respect to regulation, channel activity is activated by a change of voltage within the sarcoplasmic reticulum lumen and blocked by luminal high Ca(2+) levels. Functionally, intracellular monovalent cation channel required for maintenance of rapid intracellular calcium release. Acts as a potassium counter-ion channel that functions in synchronization with calcium release from intracellular stores. Opened by a change of voltage within the sarcoplasmic reticulum lumen. This chain is Trimeric intracellular cation channel type A (Tmem38a), found in Mus musculus (Mouse).